We begin with the raw amino-acid sequence, 356 residues long: Protein MGF 360-19R (356 aa).

The ANK repeat unit spans residues 61–93 (LLNTALMKAVQENNYELIMLFTEWGANINYGLL).

Belongs to the asfivirus MGF 360 family.

In terms of biological role, plays a role in virus cell tropism, and may be required for efficient virus replication in macrophages. The protein is Protein MGF 360-19R of African swine fever virus (isolate Pig/Kenya/KEN-50/1950) (ASFV).